Here is a 918-residue protein sequence, read N- to C-terminus: DNA ligase 1 (918 aa).

The span at 1-15 (MQRSIMSFFQPTTTE) shows a compositional bias: polar residues. Residues 1-271 (MQRSIMSFFQ…DPTNYNPSKS (271 aa)) form a disordered region. Positions 16–54 (GKAKKPEKEIPSSIREKEPPPKVALKERNRAVPESDSPV) are enriched in basic and acidic residues. Phosphoserine is present on residues serine 50, serine 52, serine 66, and serine 67. Threonine 78 carries the post-translational modification Phosphothreonine. Low complexity predominate over residues 81–92 (VQKPVSDSKQSS). Over residues 100–114 (PENSPVFNCSPSMDI) the composition is skewed to polar residues. The segment covering 120 to 130 (PKRRTARKQLP) has biased composition (basic residues). N6-acetyllysine is present on lysine 145. Threonine 195 is subject to Phosphothreonine. An N6-acetyllysine modification is found at lysine 227. A phosphoserine mark is found at serine 230 and serine 231. Phosphothreonine is present on threonine 234. Residues 240–259 (VKTEVKQEESDTPRKEETKG) are compositionally biased toward basic and acidic residues. Glutamate 566 contributes to the ATP binding site. Lysine 568 functions as the N6-AMP-lysine intermediate in the catalytic mechanism. Residues arginine 573 and glutamate 621 each contribute to the ATP site. A Mg(2+)-binding site is contributed by glutamate 621. The segment at 642–644 (KRK) is interaction with target DNA. Glutamate 720 is a Mg(2+) binding site. The ATP site is built by lysine 725 and lysine 744. Threonine 798 carries the post-translational modification Phosphothreonine. 4 positions are modified to phosphoserine: serine 801, serine 908, serine 909, and serine 913. The segment at 881–918 (DKQPEQATTSDQVASLYRKQSQIQNQQSSDLDSDVEDY) is disordered. A compositionally biased stretch (polar residues) spans 885-910 (EQATTSDQVASLYRKQSQIQNQQSSD).

The protein belongs to the ATP-dependent DNA ligase family. As to quaternary structure, interacts with PCNA. Interacts with POLB. Mg(2+) is required as a cofactor.

The protein localises to the nucleus. The enzyme catalyses ATP + (deoxyribonucleotide)n-3'-hydroxyl + 5'-phospho-(deoxyribonucleotide)m = (deoxyribonucleotide)n+m + AMP + diphosphate.. In terms of biological role, DNA ligase that seals nicks in double-stranded during DNA repair. Also involved in DNA replication and DNA recombination. In Rattus norvegicus (Rat), this protein is DNA ligase 1 (Lig1).